We begin with the raw amino-acid sequence, 81 residues long: MSTLGMTLLILLLLLPLATPDDVGQPPKRDTLRNLLKIGTRGQGGCVPPGGGRCKANQACTKGGNPGTCGFQYDLCLCLRN.

A signal peptide spans 1-20 (MSTLGMTLLILLLLLPLATP). A propeptide spanning residues 21–40 (DDVGQPPKRDTLRNLLKIGT) is cleaved from the precursor. Disulfide bonds link cysteine 46–cysteine 69, cysteine 54–cysteine 76, and cysteine 60–cysteine 78.

In terms of tissue distribution, expressed by the venom duct.

The protein resides in the secreted. This is Conotoxin Cl9.6 from Californiconus californicus (California cone).